Here is a 393-residue protein sequence, read N- to C-terminus: Formate-dependent phosphoribosylglycinamide formyltransferase (393 aa).

Residues 22-23 (EL) and Glu82 contribute to the N(1)-(5-phospho-beta-D-ribosyl)glycinamide site. Residues Arg114, Lys155, 160-165 (SSGKGQ), 195-198 (EGFV), and Glu203 contribute to the ATP site. The ATP-grasp domain maps to 119–308 (RLAAEELGLP…EFALHVRAFT (190 aa)). Glu267 and Glu279 together coordinate Mg(2+). Residues Asp286, Lys356, and 363–364 (RR) contribute to the N(1)-(5-phospho-beta-D-ribosyl)glycinamide site.

The protein belongs to the PurK/PurT family. Homodimer.

It catalyses the reaction N(1)-(5-phospho-beta-D-ribosyl)glycinamide + formate + ATP = N(2)-formyl-N(1)-(5-phospho-beta-D-ribosyl)glycinamide + ADP + phosphate + H(+). It functions in the pathway purine metabolism; IMP biosynthesis via de novo pathway; N(2)-formyl-N(1)-(5-phospho-D-ribosyl)glycinamide from N(1)-(5-phospho-D-ribosyl)glycinamide (formate route): step 1/1. In terms of biological role, involved in the de novo purine biosynthesis. Catalyzes the transfer of formate to 5-phospho-ribosyl-glycinamide (GAR), producing 5-phospho-ribosyl-N-formylglycinamide (FGAR). Formate is provided by PurU via hydrolysis of 10-formyl-tetrahydrofolate. The sequence is that of Formate-dependent phosphoribosylglycinamide formyltransferase from Vibrio cholerae serotype O1 (strain M66-2).